A 213-amino-acid polypeptide reads, in one-letter code: BREX protein BrxA (213 aa).

This sequence belongs to the BrxA family.

In terms of biological role, BREX systems (bacteriophage exclusion) provide immunity against bacteriophage. A probably non-essential part of a type 1 BREX system which protects against dsDNA phage. This system allows phage adsorption but prevents phage DNA replication, without degradation of the phage DNA. Methylation of bacterial DNA by PglX guides self/non-self discrimination. When the brxA-brxB-brxC-pglX-pglZ-brxL genes are transformed into a susceptible E.coli strain (BW25113) they confer very high resistance to infection by bacteriophage VR7 and VpaE1, about 100-fold protection against lambda, T5 and T7 and no protection against RNA phage Qbeta, ssDNA phage M13 or dSDNA phage T4 and VR5. Glycosylated phage DNA is not susceptible to BREX. The BREX system does not confer resistance to lysogenic lambda phage, i.e. prophage that are integrated into the chromosomal DNA and then induced to form phage. The polypeptide is BREX protein BrxA (Escherichia coli O9:H4 (strain HS)).